Consider the following 553-residue polypeptide: Glutamate--tRNA ligase (553 aa).

The 'HIGH' region motif lies at 98–108 (PNPSGPLHIGH).

This sequence belongs to the class-I aminoacyl-tRNA synthetase family. Glutamate--tRNA ligase type 2 subfamily.

It localises to the cytoplasm. It catalyses the reaction tRNA(Glu) + L-glutamate + ATP = L-glutamyl-tRNA(Glu) + AMP + diphosphate. In terms of biological role, catalyzes the attachment of glutamate to tRNA(Glu) in a two-step reaction: glutamate is first activated by ATP to form Glu-AMP and then transferred to the acceptor end of tRNA(Glu). The chain is Glutamate--tRNA ligase from Methanocaldococcus jannaschii (strain ATCC 43067 / DSM 2661 / JAL-1 / JCM 10045 / NBRC 100440) (Methanococcus jannaschii).